We begin with the raw amino-acid sequence, 501 residues long: MLO-like protein 5 (501 aa).

Topologically, residues 1-22 (MAGGGGGSTSGEGPRELDQTPT) are extracellular. The chain crosses the membrane as a helical span at residues 23–43 (WAVSTVCGVIILISIVLELMI). The Cytoplasmic portion of the chain corresponds to 44-68 (HKIGEVFTERRKKALYEALQKIKNE). A helical membrane pass occupies residues 69–89 (LMVLGFISLLLTFGQNYIASL). The Extracellular portion of the chain corresponds to 90 to 151 (CVASRYGHAM…ISLNALHQVH (62 aa)). A helical membrane pass occupies residues 152–172 (IFIFFLAVFHVIYSAITMMLG). The Cytoplasmic portion of the chain corresponds to 173–273 (RAKIRGWKVW…IKRSLEDDFK (101 aa)). The chain crosses the membrane as a helical span at residues 274–294 (VVVGISPELWAFVMLFLLFDV). Position 295 (histidine 295) is a topological domain, extracellular. The chain crosses the membrane as a helical span at residues 296–316 (GWYVTAVITMIPPLLTLAIGT). Over 317–359 (KLQAIISDMALEIQERHAVIQGMPLVNVSDRHFWFSRPALVLH) the chain is Cytoplasmic. A helical transmembrane segment spans residues 360–380 (IIHFILFQNAFEITYFFWIWY). Topologically, residues 381 to 391 (EFGLRSCFHHH) are extracellular. Residues 392–412 (FALIIIRVALGVGVQFLCSYI) traverse the membrane as a helical segment. Over 413–501 (TLPLYALVTQ…SQSRDLLSGP (89 aa)) the chain is Cytoplasmic. The tract at residues 443-501 (WHKNAKKKSETPGQTQPPLPNLRPKTGGDIESASPANITASVDVKESDQSQSRDLLSGP) is disordered. The interval 450–471 (KSETPGQTQPPLPNLRPKTGGD) is calmodulin-binding. Over residues 491-501 (QSQSRDLLSGP) the composition is skewed to polar residues.

Belongs to the MLO family.

The protein localises to the membrane. May be involved in modulation of pathogen defense and leaf cell death. Activity seems to be regulated by Ca(2+)-dependent calmodulin binding and seems not to require heterotrimeric G proteins. The protein is MLO-like protein 5 (MLO5) of Arabidopsis thaliana (Mouse-ear cress).